Here is a 378-residue protein sequence, read N- to C-terminus: MCSPPPYPPQGHHYPPSPHGSYYSPTPYGAAPSPPQSSSPHPRGYHSPSPSWGQLPPRPPQEAQSFGGGAPSNYRFQYSACTGRRKALLIGINYIGQPNQLRGCINDVANVSRYLNERCRYRREDMVILTDDQENPLSIPTKNNILRAMQWLVKDAQPNDSLFIHFSGHGGRTPDLDGDEEDGYDDVIYPVDYRTAGHIVDDEMHAIMVRPLRPGVRLTAIFDSCHSGTALDLPYVYSTQGVLKEPNLAKEAAMDLFSAISSYGQGDLTGMAKTAIGFFKKAAIGDSARQRTVMTKTSPADVVMFSGSKDTQTSADTFQDGEARGALSWAFVKTLQERPHQSYLQLLNSIRAELEGKYTQKPQLSCSHPLDVNLLFVM.

The segment at 1–70 (MCSPPPYPPQ…QEAQSFGGGA (70 aa)) is disordered. Positions 10–29 (QGHHYPPSPHGSYYSPTPYG) are enriched in low complexity. Catalysis depends on residues H169 and C225.

The protein belongs to the peptidase C14B family.

Involved in cell death (apoptosis). This Aspergillus terreus (strain NIH 2624 / FGSC A1156) protein is Metacaspase-1B (casB).